The primary structure comprises 93 residues: Co-chaperonin GroES (93 aa).

Belongs to the GroES chaperonin family. Heptamer of 7 subunits arranged in a ring. Interacts with the chaperonin GroEL.

Its subcellular location is the cytoplasm. Its function is as follows. Together with the chaperonin GroEL, plays an essential role in assisting protein folding. The GroEL-GroES system forms a nano-cage that allows encapsulation of the non-native substrate proteins and provides a physical environment optimized to promote and accelerate protein folding. GroES binds to the apical surface of the GroEL ring, thereby capping the opening of the GroEL channel. The protein is Co-chaperonin GroES of Streptococcus gordonii (strain Challis / ATCC 35105 / BCRC 15272 / CH1 / DL1 / V288).